Here is a 335-residue protein sequence, read N- to C-terminus: Nuclear distribution protein nudE homolog 1 (335 aa).

The interval 1–93 (MEDSGKTFSS…VQHSEGYRQI (93 aa)) is self-association. Residues 18–188 (WKDLAMTYKQ…ELAVQQKQEK (171 aa)) are a coiled coil. Residues 88–156 (EGYRQISALE…ERNAFLESEL (69 aa)) form an interaction with PAFAH1B1 region. The tract at residues 167-290 (QRLKDEARDL…QSPNRTGGPA (124 aa)) is interaction with CENPF. The segment at 181–246 (AVQQKQEKPR…DDSTGGTPLT (66 aa)) is disordered. Residues 204–214 (TAVQATGSVPS) are compositionally biased toward polar residues. Ser-211 is modified (phosphoserine). Residues Thr-215 and Thr-228 each carry the phosphothreonine modification. A phosphoserine mark is found at Ser-231 and Ser-239. Residues Thr-243 and Thr-246 each carry the phosphothreonine modification. A lipid anchor (S-palmitoyl cysteine; by ZDHHC2, ZDHHC3 and ZDHHC7) is attached at Cys-274. A disordered region spans residues 279–335 (YDQSPNRTGGPASGRSSKNRDGGERRPSSTSVPLGDKGLDTSCRWLSKSTTRSSSSC). Ser-282 carries the phosphoserine modification. The segment covering 296-305 (KNRDGGERRP) has biased composition (basic and acidic residues). Ser-309 is modified (phosphoserine). The span at 325–335 (SKSTTRSSSSC) shows a compositional bias: low complexity.

The protein belongs to the nudE family. In terms of assembly, homodimer. Interacts with CNTRL, LIS1, dynein, SLMAP and TCP1. Interacts with CENPF, dynactin, tubulin gamma, PAFAH1B1, PCM1 and PCNT. Interacts with ZNF365. Interacts with GTP-bound RAB9A and RAB9B; the interaction leads to RAB9-dynein motor tethering. Interacts (via C-terminus) with MCRS1 (via C-terminus); phosphorylation of NDE1 inhibits the interaction. Phosphorylated in mitosis. Phosphorylated in vitro by CDC2. Phosphorylation at Thr-246 is essential for the G2/M transition. Expressed in the neuroepithelium throughout the developing brain, including the cerebral cortex and cerebellum.

The protein localises to the cytoplasm. Its subcellular location is the cytoskeleton. The protein resides in the microtubule organizing center. It localises to the centrosome. It is found in the chromosome. The protein localises to the centromere. Its subcellular location is the kinetochore. The protein resides in the spindle. It localises to the cleavage furrow. It is found in the cytoplasmic vesicle membrane. Required for centrosome duplication and formation and function of the mitotic spindle. Essential for the development of the cerebral cortex. May regulate the production of neurons by controlling the orientation of the mitotic spindle during division of cortical neuronal progenitors of the proliferative ventricular zone of the brain. Orientation of the division plane perpendicular to the layers of the cortex gives rise to two proliferative neuronal progenitors whereas parallel orientation of the division plane yields one proliferative neuronal progenitor and a postmitotic neuron. A premature shift towards a neuronal fate within the progenitor population may result in an overall reduction in the final number of neurons and an increase in the number of neurons in the deeper layers of the cortex. Acts as a RAB9A/B effector that tethers RAB9-associated late endosomes to the dynein motor for their retrograde transport to the trans-Golgi network. The polypeptide is Nuclear distribution protein nudE homolog 1 (Homo sapiens (Human)).